The primary structure comprises 96 residues: Co-chaperonin GroES (96 aa).

Belongs to the GroES chaperonin family. Heptamer of 7 subunits arranged in a ring. Interacts with the chaperonin GroEL.

It is found in the cytoplasm. Functionally, together with the chaperonin GroEL, plays an essential role in assisting protein folding. The GroEL-GroES system forms a nano-cage that allows encapsulation of the non-native substrate proteins and provides a physical environment optimized to promote and accelerate protein folding. GroES binds to the apical surface of the GroEL ring, thereby capping the opening of the GroEL channel. The polypeptide is Co-chaperonin GroES (Shewanella piezotolerans (strain WP3 / JCM 13877)).